A 120-amino-acid polypeptide reads, in one-letter code: Large ribosomal subunit protein bL12 (120 aa).

The protein belongs to the bacterial ribosomal protein bL12 family. Homodimer. Part of the ribosomal stalk of the 50S ribosomal subunit. Forms a multimeric L10(L12)X complex, where L10 forms an elongated spine to which 2 to 4 L12 dimers bind in a sequential fashion. Binds GTP-bound translation factors.

Forms part of the ribosomal stalk which helps the ribosome interact with GTP-bound translation factors. Is thus essential for accurate translation. The sequence is that of Large ribosomal subunit protein bL12 from Clostridium botulinum (strain Alaska E43 / Type E3).